Reading from the N-terminus, the 436-residue chain is Prenyltransferase nscD (436 aa).

The protein belongs to the tryptophan dimethylallyltransferase family.

It participates in secondary metabolite biosynthesis. Its function is as follows. Prenyltransferase; part of the gene cluster that mediates the biosynthesis of neosartoricin B, a prenylated anthracenone that probably exhibits T-cell antiproliferative activity, suggestive of a physiological role as an immunosuppressive agent. The non-reducing polyketide synthase nscA probably synthesizes and cyclizes the decaketide backbone. The hydrolase nscB then mediates the product release through hydrolysis followed by spontaneous decarboxylation. The prenyltransferase nscD catalyzes the addition of the dimethylallyl group to the aromatic C5. The FAD-dependent monooxygenase nscC is then responsible for the stereospecific hydroxylation at C2. Neosartoricin B can be converted into two additional compounds neosartoricins C and D. Neosartoricin C is a spirocyclic compound that is cyclized through the attack of C3 hydroxyl on C14, followed by dehydration. On the other hand, neosartoricin D is a further cyclized compound in which attack of C2 on C14 in neosartoricin C results in the formation of the acetal-containing dioxabicyclo-octanone ring. Both of these compounds are novel and possibly represent related metabolites of the gene cluster. In Arthroderma gypseum (strain ATCC MYA-4604 / CBS 118893) (Microsporum gypseum), this protein is Prenyltransferase nscD.